The following is a 205-amino-acid chain: Probable GTP-binding protein EngB (205 aa).

Residues 27–201 (TGIEIAFAGR…AAKLDFWFSP (175 aa)) enclose the EngB-type G domain. GTP-binding positions include 35 to 42 (GRSNAGKS), 62 to 66 (GRTQL), 80 to 83 (DLPG), 147 to 150 (TKAD), and 180 to 182 (FSA). Residues S42 and T64 each contribute to the Mg(2+) site.

It belongs to the TRAFAC class TrmE-Era-EngA-EngB-Septin-like GTPase superfamily. EngB GTPase family. Requires Mg(2+) as cofactor.

Functionally, necessary for normal cell division and for the maintenance of normal septation. This is Probable GTP-binding protein EngB from Haemophilus influenzae (strain 86-028NP).